Consider the following 116-residue polypeptide: MALKIRLRQQGRKNHVVYRLVLADVESPRDGKYIELLGWYDPHSEQNYQLKSERIFYWLNQGAELTEKAGALVKQGAPGVYAELMAKKVARRAVVRQKRRAYRQRLAARKAEAAAK.

Belongs to the bacterial ribosomal protein bS16 family.

This chain is Small ribosomal subunit protein bS16, found in Chlamydia trachomatis serovar L2 (strain ATCC VR-902B / DSM 19102 / 434/Bu).